The sequence spans 211 residues: MFTYYFQGLALGAAMILPLGPQNAFVMNQGIRRQYHLMIALLCAVSDLLLICAGIFGGSALLMQSPWLLALVTWGGVAFLLCYGFGALKTAFSQSLELANAEVMQQGRWKIIITMLAVTWLNPHVYLDTFVVLGSLGGQLAVEPKRWFALGTISASFLWFFGLALLAAWLAPRLRTARAQRIINIVVGAVMWFIAFQLAREGVSHIQALLN.

A run of 6 helical transmembrane segments spans residues 1-21 (MFTYYFQGLALGAAMILPLGP), 37-57 (LMIALLCAVSDLLLICAGIFG), 68-88 (LLALVTWGGVAFLLCYGFGAL), 111-131 (IIITMLAVTWLNPHVYLDTFV), 147-167 (WFALGTISASFLWFFGLALLA), and 179-199 (AQRIINIVVGAVMWFIAFQLA).

The protein belongs to the LysE/ArgO transporter (TC 2.A.75) family.

It is found in the cell inner membrane. The enzyme catalyses L-arginine(in) = L-arginine(out). Functionally, involved in the export of arginine. Important to control the intracellular level of arginine and the correct balance between arginine and lysine. The sequence is that of Arginine exporter protein ArgO from Klebsiella pneumoniae subsp. pneumoniae (strain ATCC 700721 / MGH 78578).